Here is a 410-residue protein sequence, read N- to C-terminus: SPbeta prophage-derived uncharacterized protein YonV (410 aa).

The chain is SPbeta prophage-derived uncharacterized protein YonV (yonV) from Bacillus subtilis (strain 168).